The sequence spans 254 residues: Probable derlin-2 homolog (254 aa).

Topologically, residues 1-17 (MAQPFEDWYKNLPIVTK) are cytoplasmic. A helical transmembrane segment spans residues 18-38 (IYMTGCVVTSVSVYLGLVGPL). Residues 39–95 (RLYLNFPLVFGKYEFWRLFTNFFFYDEIGMNFFFHMYFLVRHSRLLEESSFRGRSAD) lie on the Lumenal side of the membrane. A helical membrane pass occupies residues 96 to 116 (YLFMWIFGSFLLLIMDAFLFY). At 117 to 118 (TK) the chain is on the cytoplasmic side. A helical membrane pass occupies residues 119–139 (IVTKVLFLAPSIAFMVIYVWS). Residues 140–146 (RRNPNMH) are Lumenal-facing. Residues 147–167 (ISFLGLFTFSAPYLPWVILIM) traverse the membrane as a helical segment. Over 168–254 (GYLFNHDLTT…FLNEDDLDQQ (87 aa)) the chain is Cytoplasmic.

The protein belongs to the derlin family.

The protein localises to the endoplasmic reticulum membrane. Functionally, may be involved in the degradation process of specific misfolded endoplasmic reticulum (ER) luminal proteins. May also be involved in endoplasmic reticulum stress-induced pre-emptive quality control, a mechanism that selectively attenuates the translocation of newly synthesized proteins into the endoplasmic reticulum and reroutes them to the cytosol for proteasomal degradation. This Dictyostelium discoideum (Social amoeba) protein is Probable derlin-2 homolog (derl2).